Here is a 1063-residue protein sequence, read N- to C-terminus: Exportin-1 (1063 aa).

The 67-residue stretch at 43–109 (AQSILTTLKE…KKYVVSLIIK (67 aa)) folds into the Importin N-terminal domain. Residues 1034-1063 (AEEQSNKHQMQRNIPGMLNPHELPEDMQDE) are disordered.

Belongs to the exportin family. In terms of assembly, interacts with Clbn (via its N-terminus). Associates with the nuclear pore complex via interaction with mbo and Nup214. Interacts with target proteins containing NES sequences such as actin and dl. In terms of tissue distribution, high expression observed in the developing embryonic brain, hind gut and posterior spiracles shortly before dorsal closure; and in the ventral nerve cord, midgut and somatic musculature shortly after dorsal closure. Expression increases when the tissue is well developed.

Its subcellular location is the nucleus. It localises to the nucleus membrane. Its function is as follows. Receptor for the leucine-rich nuclear export signal (NES). Binds cooperatively to the NES on its target protein and to the small GTPase Ran in its active GTP-bound form. Involved in the export of dl, RpS2 and the pre-40S ribosome from the nucleus to the cytoplasm. Plays an important role in nuclear pore assembly by mediating nucleoporin condensation and biogenesis of annulate lamellae. Required for the function or maintenance of certain tissues such as brain and gut. This Drosophila melanogaster (Fruit fly) protein is Exportin-1.